A 93-amino-acid polypeptide reads, in one-letter code: Large ribosomal subunit protein uL23cz/uL23cy (93 aa).

Belongs to the universal ribosomal protein uL23 family. In terms of assembly, part of the 50S ribosomal subunit.

The protein localises to the plastid. It localises to the chloroplast. Functionally, binds to 23S rRNA. In Glycine max (Soybean), this protein is Large ribosomal subunit protein uL23cz/uL23cy (rpl23-A).